We begin with the raw amino-acid sequence, 114 residues long: Ribonuclease P protein component (114 aa).

The protein belongs to the RnpA family. Consists of a catalytic RNA component (M1 or rnpB) and a protein subunit.

The catalysed reaction is Endonucleolytic cleavage of RNA, removing 5'-extranucleotides from tRNA precursor.. Its function is as follows. RNaseP catalyzes the removal of the 5'-leader sequence from pre-tRNA to produce the mature 5'-terminus. It can also cleave other RNA substrates such as 4.5S RNA. The protein component plays an auxiliary but essential role in vivo by binding to the 5'-leader sequence and broadening the substrate specificity of the ribozyme. The sequence is that of Ribonuclease P protein component from Alkaliphilus oremlandii (strain OhILAs) (Clostridium oremlandii (strain OhILAs)).